The primary structure comprises 539 residues: Phosphoenolpyruvate carboxykinase (ATP) (539 aa).

The substrate site is built by Arg-64, Tyr-206, and Lys-212. ATP is bound by residues Lys-212, His-231, and 247-255 (GLSGTGKTT). 2 residues coordinate Mn(2+): Lys-212 and His-231. Asp-268 is a binding site for Mn(2+). ATP is bound by residues Glu-296, Arg-332, 448-449 (RI), and Thr-454. Arg-332 provides a ligand contact to substrate.

This sequence belongs to the phosphoenolpyruvate carboxykinase (ATP) family. Monomer. The cofactor is Mn(2+).

The protein localises to the cytoplasm. The catalysed reaction is oxaloacetate + ATP = phosphoenolpyruvate + ADP + CO2. It participates in carbohydrate biosynthesis; gluconeogenesis. In terms of biological role, involved in the gluconeogenesis. Catalyzes the conversion of oxaloacetate (OAA) to phosphoenolpyruvate (PEP) through direct phosphoryl transfer between the nucleoside triphosphate and OAA. This Yersinia pseudotuberculosis serotype IB (strain PB1/+) protein is Phosphoenolpyruvate carboxykinase (ATP).